The chain runs to 346 residues: Ribulose-5-phosphate reductase (346 aa).

4 residues coordinate Zn(2+): Cys-45, His-71, Glu-72, and Glu-151.

Belongs to the zinc-containing alcohol dehydrogenase family. It depends on Zn(2+) as a cofactor.

It carries out the reaction D-ribitol 5-phosphate + NADP(+) = D-ribulose 5-phosphate + NADPH + H(+). The protein operates within cell wall biogenesis; poly(ribitol phosphate) teichoic acid biosynthesis. Functionally, catalyzes the NADPH dependent reduction of D-ribulose 5-phosphate to D-ribitol 5-phosphate. This chain is Ribulose-5-phosphate reductase, found in Streptococcus pneumoniae (strain ATCC BAA-255 / R6).